A 327-amino-acid polypeptide reads, in one-letter code: DNA repair protein XRCC4 (327 aa).

The segment at 1–211 is interaction with IFFO1; it reads MERKVSRISL…QLEKNLKPER (211 aa). Phosphoserine is present on serine 53. 2 coiled-coil regions span residues 133 to 153 and 183 to 213; these read IAEK…LLRD and LNEK…ERET. Interaction with LIG4 stretches follow at residues 179-210 and 179-211; these read FILV…LKPE and FILV…KPER. Position 192 is a phosphoserine (serine 192). Lysine 208 is covalently cross-linked (Glycyl lysine isopeptide (Lys-Gly) (interchain with G-Cter in SUMO)). Tyrosine 226 is modified (phosphotyrosine). Phosphoserine is present on serine 229. Residue threonine 230 is modified to Phosphothreonine. Phosphoserine is present on residues serine 249 and serine 253. The disordered stretch occupies residues 255-327; that stretch reads DVTDIAPSRK…RNSSPEDIFD (73 aa). The Nuclear localization signal signature appears at 263-268; it reads RKRRHH. Lysine 289 participates in a covalent cross-link: Glycyl lysine isopeptide (Lys-Gly) (interchain with G-Cter in ubiquitin). Phosphoserine is present on residues serine 294, serine 295, serine 308, and serine 313. Residues 308 to 327 are compositionally biased toward polar residues; the sequence is SAGNMSLETLRNSSPEDIFD. At threonine 316 the chain carries Phosphothreonine. Phosphoserine is present on residues serine 320 and serine 321.

Belongs to the XRCC4-XLF family. XRCC4 subfamily. As to quaternary structure, homodimer and homotetramer in solution. Interacts with NHEJ1/XLF; the interaction is direct and is mediated via a head-to-head interaction between N-terminal head regions. Interacts with LIG4; the LIG4-XRCC4 subcomplex has a 1:2 stoichiometry and XRCC4 is required for LIG4 stability. Component of the core long-range non-homologous end joining (NHEJ) complex (also named DNA-PK complex) composed of PRKDC, LIG4, XRCC4, XRCC6/Ku70, XRCC5/Ku86 and NHEJ1/XLF. Additional component of the NHEJ complex includes PAXX. Following autophosphorylation, PRKDC dissociates from DNA, leading to formation of the short-range NHEJ complex, composed of LIG4, XRCC4, XRCC6/Ku70, XRCC5/Ku86 and NHEJ1/XLF. Interacts with PRKDC; the interaction is direct. Interacts with XRCC6/Ku70; the interaction is direct. Interacts with APTX and APLF. Forms a heterotetramer with IFFO1; the interaction involves LIG4-free XRCC4 and leads to the relocalization of IFFO1 to the sites of DNA damage. Interacts with PNKP; mainly interacts with PNKP when phosphorylated at Thr-230, but is also able to interact at much lower level with PNKP when not unphosphorylated. Interacts with POLL (DNA polymerase lambda). In terms of assembly, interacts with XKR4; interacts with the processed form of XKR4, which is cleaved by caspase. In terms of processing, phosphorylated by PRKDC at the C-terminus in response to DNA damage; Ser-253 constitutes the main phosphorylation sites. Phosphorylations by PRKDC at the C-terminus of XRCC4 and NHEJ1/XLF are highly redundant and regulate ability of the XRCC4-NHEJ1/XLF subcomplex to bridge DNA. Phosphorylation by PRKDC does not prevent interaction with NHEJ1/XLF but disrupts ability to bridge DNA and promotes detachment from DNA. Phosphorylation at Ser-320 and Ser-321 by PRKDC promotes recognition by the SCF(FBXW7) complex and subsequent ubiquitination via 'Lys-63'-linked ubiquitin. Phosphorylation at Thr-230 by CK2 promotes interaction with PNKP; regulating PNKP activity and localization to DNA damage sites. Phosphorylation by CK2 promotes interaction with APTX. Post-translationally, ubiquitinated at Lys-289 by the SCF(FBXW7) complex via 'Lys-63'-linked ubiquitination, thereby promoting double-strand break repair: the SCF(FBXW7) complex specifically recognizes XRCC4 when phosphorylated at Ser-320 and Ser-321 by PRKDC, and 'Lys-63'-linked ubiquitination facilitates DNA non-homologous end joining (NHEJ) by enhancing association with XRCC5/Ku80 and XRCC6/Ku70. Monoubiquitinated. Undergoes proteolytic processing by caspase-3 (CASP3). This generates the protein XRCC4, C-terminus (XRCC4/C), which translocates to the cytoplasm and activates phospholipid scramblase activity of XKR4, thereby promoting phosphatidylserine exposure on apoptotic cell surface.

The protein localises to the nucleus. It is found in the chromosome. It localises to the cytoplasm. In terms of biological role, DNA non-homologous end joining (NHEJ) core factor, required for double-strand break repair and V(D)J recombination. Acts as a scaffold protein that regulates recruitment of other proteins to DNA double-strand breaks (DSBs). Associates with NHEJ1/XLF to form alternating helical filaments that bridge DNA and act like a bandage, holding together the broken DNA until it is repaired. The XRCC4-NHEJ1/XLF subcomplex binds to the DNA fragments of a DSB in a highly diffusive manner and robustly bridges two independent DNA molecules, holding the broken DNA fragments in close proximity to one other. The mobility of the bridges ensures that the ends remain accessible for further processing by other repair factors. Plays a key role in the NHEJ ligation step of the broken DNA during DSB repair via direct interaction with DNA ligase IV (LIG4): the LIG4-XRCC4 subcomplex reseals the DNA breaks after the gap filling is completed. XRCC4 stabilizes LIG4, regulates its subcellular localization and enhances LIG4's joining activity. Binding of the LIG4-XRCC4 subcomplex to DNA ends is dependent on the assembly of the DNA-dependent protein kinase complex DNA-PK to these DNA ends. Promotes displacement of PNKP from processed strand break termini. Functionally, acts as an activator of the phospholipid scramblase activity of XKR4. This form, which is generated upon caspase-3 (CASP3) cleavage, translocates into the cytoplasm and interacts with XKR4, thereby promoting phosphatidylserine scramblase activity of XKR4 and leading to phosphatidylserine exposure on apoptotic cell surface. In Cricetulus griseus (Chinese hamster), this protein is DNA repair protein XRCC4.